We begin with the raw amino-acid sequence, 410 residues long: NADH-quinone oxidoreductase subunit H (410 aa).

9 consecutive transmembrane segments (helical) span residues 11 to 31 (LVAAKAIAVFVFLMLTVLVAI), 79 to 99 (FVYFVAPIISVIPAFTAFAFI), 119 to 139 (LPVAVLFILGLSAIGVYGIVL), 160 to 180 (VISYEVAMGLSFATVFLMAGT), 192 to 212 (GVWYAFLLLPSFVIYLISMVG), 257 to 277 (ALAATLFFGGWHAPWPLNMWA), 283 to 303 (WWPLIWFTAKVWGFLFIYFWL), 317 to 337 (ALGWKLLIPVSLVWVMVAAII), and 347 to 367 (YWTPTLVFSSIVVAAAMVLLL). The interval 376 to 410 (ARASARQRGDEGTSPEPAFPTPPLLAGATKENAGG) is disordered.

It belongs to the complex I subunit 1 family. As to quaternary structure, NDH-1 is composed of 14 different subunits. Subunits NuoA, H, J, K, L, M, N constitute the membrane sector of the complex.

The protein resides in the cell membrane. The catalysed reaction is a quinone + NADH + 5 H(+)(in) = a quinol + NAD(+) + 4 H(+)(out). NDH-1 shuttles electrons from NADH, via FMN and iron-sulfur (Fe-S) centers, to quinones in the respiratory chain. The immediate electron acceptor for the enzyme in this species is believed to be menaquinone. Couples the redox reaction to proton translocation (for every two electrons transferred, four hydrogen ions are translocated across the cytoplasmic membrane), and thus conserves the redox energy in a proton gradient. The protein is NADH-quinone oxidoreductase subunit H of Mycobacterium bovis (strain ATCC BAA-935 / AF2122/97).